Here is a 207-residue protein sequence, read N- to C-terminus: Testis-expressed protein 35 (207 aa).

Residues 43–79 (RKGMTRELKNELREVREQLTEKMEEIKQIKDIMDKDF) adopt a coiled-coil conformation.

Testis-specific. Expressed during spermatogenesis.

Its subcellular location is the nucleus. The protein is Testis-expressed protein 35 (Tex35) of Mus musculus (Mouse).